The following is a 693-amino-acid chain: A disintegrin and metalloproteinase with thrombospondin motifs like (693 aa).

An N-terminal signal peptide occupies residues 1 to 24 (MESSVATHWLSAFVILCSFITTQS). The segment covering 67 to 80 (IPTSHPANSNSADS) has biased composition (polar residues). Positions 67–91 (IPTSHPANSNSADSGKTPHLKTEKV) are disordered. Residues Asn-124 and Asn-194 are each glycosylated (N-linked (GlcNAc...) asparagine). Positions 353 to 585 (IYPEILVIVD…DTATCLYNSP (233 aa)) constitute a Peptidase M12B domain. 2 cysteine pairs are disulfide-bonded: Cys-485-Cys-580 and Cys-541-Cys-564. Position 514 (His-514) interacts with Zn(2+). The Metal-binding motif lies at 514 to 525 (HEVGHLLGAVHD). Residue Glu-515 is part of the active site. Residues His-518 and His-524 each contribute to the Zn(2+) site. N-linked (GlcNAc...) asparagine glycosylation is present at Asn-687.

Requires Zn(2+) as cofactor.

Its subcellular location is the secreted. It is found in the extracellular space. It localises to the extracellular matrix. Its function is as follows. Involved in larval molting and metamorphosis. May degrade extracellular matrix (ECM) and basement membrane (BM) during the development of organs to allow degeneration and remodeling of tissues. The protein is A disintegrin and metalloproteinase with thrombospondin motifs like of Bombyx mori (Silk moth).